A 148-amino-acid polypeptide reads, in one-letter code: Large ribosomal subunit protein uL15 (148 aa).

A disordered region spans residues 1-61 (MELNELRPAV…GGQMPMQRRL (61 aa)). Residues 30–39 (TATKGHKGQK) are compositionally biased toward basic residues.

It belongs to the universal ribosomal protein uL15 family. Part of the 50S ribosomal subunit.

Binds to the 23S rRNA. The polypeptide is Large ribosomal subunit protein uL15 (Geobacter sulfurreducens (strain ATCC 51573 / DSM 12127 / PCA)).